Consider the following 435-residue polypeptide: Succinate--CoA ligase [ADP-forming] subunit beta, mitochondrial (435 aa).

The N-terminal 20 residues, 1–20 (MIGRISQPLLNTSQKFMAPA), are a transit peptide targeting the mitochondrion. The region spanning 32–259 (MKILQNYEIK…SNAEFRQAKL (228 aa)) is the ATP-grasp domain. Residues lysine 69 and 76-78 (GRG) contribute to the ATP site. Mg(2+) is bound by residues asparagine 229 and aspartate 243. Substrate-binding positions include asparagine 294 and 352–354 (GIM).

The protein belongs to the succinate/malate CoA ligase beta subunit family. ATP-specific subunit beta subfamily. As to quaternary structure, heterodimer of an alpha and a beta subunit. The beta subunit determines specificity for ATP. The cofactor is Mg(2+).

The protein resides in the mitochondrion. It catalyses the reaction succinate + ATP + CoA = succinyl-CoA + ADP + phosphate. It functions in the pathway carbohydrate metabolism; tricarboxylic acid cycle; succinate from succinyl-CoA (ligase route): step 1/1. In terms of biological role, ATP-specific succinyl-CoA synthetase functions in the citric acid cycle (TCA), coupling the hydrolysis of succinyl-CoA to the synthesis of ATP and thus represents the only step of substrate-level phosphorylation in the TCA. The beta subunit provides nucleotide specificity of the enzyme and binds the substrate succinate, while the binding sites for coenzyme A and phosphate are found in the alpha subunit. The protein is Succinate--CoA ligase [ADP-forming] subunit beta, mitochondrial of Caenorhabditis elegans.